Reading from the N-terminus, the 785-residue chain is Semaphorin-3F (785 aa).

The signal sequence occupies residues 1–18 (MLVTAFILWASLLTGAWP). In terms of domain architecture, Sema spans 31–545 (RVRLSFKELK…SAVGVTHLSL (515 aa)). N53 carries an N-linked (GlcNAc...) asparagine glycan. Residues C104 and C115 are joined by a disulfide bond. The N-linked (GlcNAc...) asparagine glycan is linked to N126. 4 cysteine pairs are disulfide-bonded: C133–C142, C300–C412, C324–C372, and C548–C566. The tract at residues 583–602 (RSRRQDVRHGNPIRQCRGFN) is disordered. One can recognise an Ig-like C2-type domain in the interval 605-695 (ANKNAVESVQ…KHIVTRVQLH (91 aa)). C678 and C746 are oxidised to a cystine. A disordered region spans residues 753–785 (VPPRPREAPGALRPPELQDQKKPRNRRHHPPDT). The segment covering 775-785 (PRNRRHHPPDT) has biased composition (basic residues).

Belongs to the semaphorin family. In terms of tissue distribution, expressed ubiquitously in adulthood. During embryogenesis, expressed in subregions of the central nervous system and various other tissues like skin, kidney, lung and intestine.

The protein resides in the secreted. The sequence is that of Semaphorin-3F (Sema3f) from Mus musculus (Mouse).